The sequence spans 344 residues: Protein RecA (344 aa).

65 to 72 (GPESSGKT) is a binding site for ATP.

Belongs to the RecA family.

The protein resides in the cytoplasm. Functionally, can catalyze the hydrolysis of ATP in the presence of single-stranded DNA, the ATP-dependent uptake of single-stranded DNA by duplex DNA, and the ATP-dependent hybridization of homologous single-stranded DNAs. It interacts with LexA causing its activation and leading to its autocatalytic cleavage. This chain is Protein RecA, found in Xanthomonas oryzae pv. oryzae (strain PXO99A).